Here is a 310-residue protein sequence, read N- to C-terminus: Collagen-like protein V6 (310 aa).

Residues 1 to 41 (MSLSTLFSPNTYNINSKSQTLNNLPSNPTSQTNTLWSNNAY) are compositionally biased toward polar residues. The interval 1 to 183 (MSLSTLFSPN…GDPGAKGDPG (183 aa)) is disordered. Collagen-like domains follow at residues 61–119 (GQKG…KGQA) and 123–182 (GLKG…KGDP). Over residues 92–101 (SGDKGDKGDS) the composition is skewed to basic and acidic residues. N-linked (GlcNAc...) asparagine; by host glycosylation is found at N227 and N264.

This sequence belongs to the sputnik virus V6 family.

In Sputnik virophage, this protein is Collagen-like protein V6.